The primary structure comprises 142 residues: Small ribosomal subunit protein uS12 (142 aa).

It belongs to the universal ribosomal protein uS12 family. In terms of assembly, part of the 30S ribosomal subunit.

In terms of biological role, with S4 and S5 plays an important role in translational accuracy. Located at the interface of the 30S and 50S subunits. This is Small ribosomal subunit protein uS12 from Methanoculleus marisnigri (strain ATCC 35101 / DSM 1498 / JR1).